Here is a 573-residue protein sequence, read N- to C-terminus: Putative cytochrome c oxidase subunit 1-beta (573 aa).

The chain crosses the membrane as a helical span at residues 53 to 73 (VIGHLYLATSFGFFLLGGVLA). Fe(II)-heme a is bound at residue histidine 100. 6 helical membrane passes run 103–123 (IMML…IMPL), 141–161 (WMYL…GGAA), 188–208 (GLVV…STII), 227–247 (ILFT…ALLM), 272–292 (LFWF…FGIV), and 304–324 (IFGY…SAVV). Cu cation is bound by residues histidine 278 and tyrosine 282. A cross-link (1'-histidyl-3'-tyrosine (His-Tyr)) is located at residues 278–282 (HPEVY). Residues histidine 327 and histidine 328 each contribute to the Cu cation site. Transmembrane regions (helical) follow at residues 329–349 (MFAT…LIAV) and 373–393 (MLWA…GVLI). Histidine 411 provides a ligand contact to heme a3. Transmembrane regions (helical) follow at residues 412-432 (LHYV…YFWW), 447-467 (IHFW…HWLG), and 490-510 (ISSI…YNVW). Histidine 413 serves as a coordination point for Fe(II)-heme a.

It belongs to the heme-copper respiratory oxidase family. As to quaternary structure, associates with subunits II, III and IV to form cytochrome c oxidase. Cu(2+) serves as cofactor. Requires heme as cofactor.

It is found in the cell membrane. The catalysed reaction is 4 Fe(II)-[cytochrome c] + O2 + 8 H(+)(in) = 4 Fe(III)-[cytochrome c] + 2 H2O + 4 H(+)(out). The protein operates within energy metabolism; oxidative phosphorylation. Its function is as follows. Cytochrome c oxidase is the component of the respiratory chain that catalyzes the reduction of oxygen to water. Subunits 1-3 form the functional core of the enzyme complex. CO I is the catalytic subunit of the enzyme. Electrons originating in cytochrome c are transferred via the copper A center of subunit 2 and heme A of subunit 1 to the bimetallic center formed by heme A3 and copper B. The protein is Putative cytochrome c oxidase subunit 1-beta (ctaD2) of Streptomyces coelicolor (strain ATCC BAA-471 / A3(2) / M145).